The chain runs to 920 residues: Isoleucine--tRNA ligase (920 aa).

The 'HIGH' region signature appears at 58–68; that stretch reads PYANGHLHLGH. Glu-569 contacts L-isoleucyl-5'-AMP. A 'KMSKS' region motif is present at residues 610-614; that stretch reads KMSKS. Residue Lys-613 coordinates ATP. Cys-895, Cys-898, Cys-910, and Cys-913 together coordinate Zn(2+).

This sequence belongs to the class-I aminoacyl-tRNA synthetase family. IleS type 1 subfamily. Monomer. Zn(2+) is required as a cofactor.

The protein resides in the cytoplasm. The catalysed reaction is tRNA(Ile) + L-isoleucine + ATP = L-isoleucyl-tRNA(Ile) + AMP + diphosphate. Functionally, catalyzes the attachment of isoleucine to tRNA(Ile). As IleRS can inadvertently accommodate and process structurally similar amino acids such as valine, to avoid such errors it has two additional distinct tRNA(Ile)-dependent editing activities. One activity is designated as 'pretransfer' editing and involves the hydrolysis of activated Val-AMP. The other activity is designated 'posttransfer' editing and involves deacylation of mischarged Val-tRNA(Ile). This Helicobacter pylori (strain HPAG1) protein is Isoleucine--tRNA ligase.